A 204-amino-acid chain; its full sequence is UPF0637 protein lmo1065 (204 aa).

The protein belongs to the UPF0637 family.

This Listeria monocytogenes serovar 1/2a (strain ATCC BAA-679 / EGD-e) protein is UPF0637 protein lmo1065.